We begin with the raw amino-acid sequence, 331 residues long: Adenosine deaminase (331 aa).

Positions 12 and 14 each coordinate Zn(2+). Histidine 14, aspartate 16, and glycine 170 together coordinate substrate. Histidine 197 serves as a coordination point for Zn(2+). The Proton donor role is filled by glutamate 200. Aspartate 278 contributes to the Zn(2+) binding site. Aspartate 279 contributes to the substrate binding site.

The protein belongs to the metallo-dependent hydrolases superfamily. Adenosine and AMP deaminases family. Adenosine deaminase subfamily. Requires Zn(2+) as cofactor.

It catalyses the reaction adenosine + H2O + H(+) = inosine + NH4(+). The catalysed reaction is 2'-deoxyadenosine + H2O + H(+) = 2'-deoxyinosine + NH4(+). In terms of biological role, catalyzes the hydrolytic deamination of adenosine and 2-deoxyadenosine. The protein is Adenosine deaminase of Shewanella baltica (strain OS185).